A 181-amino-acid chain; its full sequence is Protein Syd (181 aa).

This sequence belongs to the Syd family.

The protein localises to the cell inner membrane. In terms of biological role, interacts with the SecY protein in vivo. May bind preferentially to an uncomplexed state of SecY, thus functioning either as a chelating agent for excess SecY in the cell or as a regulatory factor that negatively controls the translocase function. The protein is Protein Syd of Escherichia coli O81 (strain ED1a).